Reading from the N-terminus, the 317-residue chain is Putative methyltransferase YMR310C (317 aa).

Residue Ser-190 is modified to Phosphoserine.

It belongs to the class IV-like SAM-binding methyltransferase superfamily.

The protein resides in the nucleus. This chain is Putative methyltransferase YMR310C, found in Saccharomyces cerevisiae (strain ATCC 204508 / S288c) (Baker's yeast).